Reading from the N-terminus, the 28-residue chain is Apolipoprotein C-I (28 aa).

It belongs to the apolipoprotein C1 family.

It localises to the secreted. Its function is as follows. Inhibitor of lipoprotein binding to the low density lipoprotein (LDL) receptor, LDL receptor-related protein, and very low density lipoprotein (VLDL) receptor. Associates with high density lipoproteins (HDL) and the triacylglycerol-rich lipoproteins in the plasma and makes up about 10% of the protein of the VLDL and 2% of that of HDL. Appears to interfere directly with fatty acid uptake and is also the major plasma inhibitor of cholesteryl ester transfer protein (CETP). Binds free fatty acids and reduces their intracellular esterification. Modulates the interaction of APOE with beta-migrating VLDL and inhibits binding of beta-VLDL to the LDL receptor-related protein. This is Apolipoprotein C-I (APOC1) from Oryctolagus cuniculus (Rabbit).